The sequence spans 241 residues: Probable transcriptional regulatory protein Mpe_A1337 (241 aa).

The segment at 1-20 (MAGHSKWANIQHRKGRQDEK) is disordered.

Belongs to the TACO1 family.

Its subcellular location is the cytoplasm. The chain is Probable transcriptional regulatory protein Mpe_A1337 from Methylibium petroleiphilum (strain ATCC BAA-1232 / LMG 22953 / PM1).